Consider the following 185-residue polypeptide: Ribosome-recycling factor (185 aa).

This sequence belongs to the RRF family.

It localises to the cytoplasm. Responsible for the release of ribosomes from messenger RNA at the termination of protein biosynthesis. May increase the efficiency of translation by recycling ribosomes from one round of translation to another. The protein is Ribosome-recycling factor of Mycobacterium leprae (strain Br4923).